A 507-amino-acid polypeptide reads, in one-letter code: Glutamyl-tRNA(Gln) amidotransferase subunit A, mitochondrial (507 aa).

The segment at 29-51 is disordered; sequence THPPEPIPPPPPPAPSSSPSPKQ. Residues 31 to 46 are compositionally biased toward pro residues; sequence PPEPIPPPPPPAPSSS. Active-site charge relay system residues include Lys-57 and Ser-135. Ser-159 functions as the Acyl-ester intermediate in the catalytic mechanism.

The protein belongs to the amidase family. GatA subfamily. In terms of assembly, subunit of the heterotrimeric GatCAB amidotransferase (AdT) complex, composed of A, B and C subunits.

It is found in the mitochondrion. The catalysed reaction is L-glutamyl-tRNA(Gln) + L-glutamine + ATP + H2O = L-glutaminyl-tRNA(Gln) + L-glutamate + ADP + phosphate + H(+). Its function is as follows. Allows the formation of correctly charged Gln-tRNA(Gln) through the transamidation of misacylated Glu-tRNA(Gln) in the mitochondria. The reaction takes place in the presence of glutamine and ATP through an activated gamma-phospho-Glu-tRNA(Gln). The chain is Glutamyl-tRNA(Gln) amidotransferase subunit A, mitochondrial from Podospora anserina (strain S / ATCC MYA-4624 / DSM 980 / FGSC 10383) (Pleurage anserina).